We begin with the raw amino-acid sequence, 1089 residues long: Probable transport protein MmpL8 (1089 aa).

Residues 1–26 form a disordered region; the sequence is MCDVLMQPVRTPRPSTNLRSKPLRPT. Helical transmembrane passes span 44-64, 222-242, 257-277, 316-336, 349-369, 400-420, 555-575, 874-894, 898-918, 930-950, 973-993, and 996-1016; these read WVVIAFWVALAGLLAPTVPSL, ITILLLVILLIIYGNPITMVL, LVAIAGLAGLGIANQSIIFMS, IGKVIAASAATVAITFLGMVF, LGISVAVVFFAAVTLLPALMV, KTHLLASALVLVILAGCAGLA, AISTVGGLIDALAYLQDLLGG, IIAMTVCIVLLILIVLLRAIV, YLIGSVIVSYLAALGIGVIVF, IPGLTFVILVAVGADYNMLLI, GGVITAAGLIMAASMYGLVFA, and GSVVQGAFVLGTGLLLDTFLV. Positions 1056–1078 are disordered; that stretch reads RTKRKPLLPKEEEEQSPPDDDDL. Acidic residues predominate over residues 1066 to 1078; the sequence is EEEEQSPPDDDDL.

It belongs to the resistance-nodulation-cell division (RND) (TC 2.A.6) family. MmpL subfamily.

The protein localises to the cell membrane. The polypeptide is Probable transport protein MmpL8 (mmpL8) (Mycobacterium tuberculosis (strain ATCC 25177 / H37Ra)).